The following is a 603-amino-acid chain: Aspartate--tRNA(Asp/Asn) ligase (603 aa).

E182 serves as a coordination point for L-aspartate. An aspartate region spans residues 206 to 209 (QLFK). An L-aspartate-binding site is contributed by R228. Residues 228 to 230 (RDE) and Q237 contribute to the ATP site. Residue H454 coordinates L-aspartate. Residue E500 participates in ATP binding. R507 contributes to the L-aspartate binding site. An ATP-binding site is contributed by 552–555 (GLDR).

This sequence belongs to the class-II aminoacyl-tRNA synthetase family. Type 1 subfamily. As to quaternary structure, homodimer.

The protein resides in the cytoplasm. The enzyme catalyses tRNA(Asx) + L-aspartate + ATP = L-aspartyl-tRNA(Asx) + AMP + diphosphate. Its function is as follows. Aspartyl-tRNA synthetase with relaxed tRNA specificity since it is able to aspartylate not only its cognate tRNA(Asp) but also tRNA(Asn). Reaction proceeds in two steps: L-aspartate is first activated by ATP to form Asp-AMP and then transferred to the acceptor end of tRNA(Asp/Asn). This chain is Aspartate--tRNA(Asp/Asn) ligase, found in Aquifex aeolicus (strain VF5).